Reading from the N-terminus, the 805-residue chain is Leucine--tRNA ligase (805 aa).

The 'HIGH' region motif lies at 40–51; it reads PYPSGSGLHVGH. Residues 576–580 carry the 'KMSKS' region motif; the sequence is KMSKS. Residue Lys-579 participates in ATP binding.

This sequence belongs to the class-I aminoacyl-tRNA synthetase family.

The protein resides in the cytoplasm. It carries out the reaction tRNA(Leu) + L-leucine + ATP = L-leucyl-tRNA(Leu) + AMP + diphosphate. This is Leucine--tRNA ligase from Chloroherpeton thalassium (strain ATCC 35110 / GB-78).